We begin with the raw amino-acid sequence, 1013 residues long: GPI ethanolamine phosphate transferase 3 (1013 aa).

Residues 41–61 traverse the membrane as a helical segment; that stretch reads TLYIFLYSALAALQFIAIAFF. N184, N205, N336, N399, and N423 each carry an N-linked (GlcNAc...) asparagine glycan. Helical transmembrane passes span 447–467, 484–504, and 515–535; these read YYSI…LITI, VPTI…VFYV, and LWAS…VPIF. A glycan (N-linked (GlcNAc...) asparagine) is linked at N539. 4 helical membrane passes run 558–578, 582–602, 643–663, and 682–702; these read VAAF…FTIW, IVSF…VFLP, IVGG…SLIT, and NYSF…PACI. N707 carries an N-linked (GlcNAc...) asparagine glycan. The chain crosses the membrane as a helical span at residues 715–735; sequence AAPIWIGMLMKSILFVNFIYW. N-linked (GlcNAc...) asparagine glycans are attached at residues N742, N750, and N755. Helical transmembrane passes span 761–781, 802–822, 825–845, 868–888, 899–919, 943–963, and 977–997; these read IVVG…PLCI, NAYG…ILLF, PLAQ…LEIF, FFST…GFIL, LGIV…VALL, GMLL…VTNF, and FMFA…ITIA.

Belongs to the PIGG/PIGN/PIGO family. PIGO subfamily.

It is found in the endoplasmic reticulum membrane. It functions in the pathway glycolipid biosynthesis; glycosylphosphatidylinositol-anchor biosynthesis. Its function is as follows. Involved in glycosylphosphatidylinositol-anchor biosynthesis. Transfers ethanolamine phosphate to the GPI third mannose which links the GPI-anchor to the C-terminus of the proteins by an amide bond. Involved in cell wall biosynthesis. The sequence is that of GPI ethanolamine phosphate transferase 3 (GPI13) from Eremothecium gossypii (strain ATCC 10895 / CBS 109.51 / FGSC 9923 / NRRL Y-1056) (Yeast).